The chain runs to 326 residues: Pyruvate dehydrogenase E1 component subunit alpha (326 aa).

Heterodimer of an alpha and a beta chain. The cofactor is thiamine diphosphate.

The catalysed reaction is N(6)-[(R)-lipoyl]-L-lysyl-[protein] + pyruvate + H(+) = N(6)-[(R)-S(8)-acetyldihydrolipoyl]-L-lysyl-[protein] + CO2. The pyruvate dehydrogenase complex catalyzes the overall conversion of pyruvate to acetyl-CoA and CO(2). It contains multiple copies of three enzymatic components: pyruvate dehydrogenase (E1), dihydrolipoamide acetyltransferase (E2) and lipoamide dehydrogenase (E3). The sequence is that of Pyruvate dehydrogenase E1 component subunit alpha (pdhA) from Rickettsia bellii (strain RML369-C).